The primary structure comprises 588 residues: NADP-dependent malic enzyme 2 (588 aa).

Residues 1–21 (MGSTPTDLPGEDVADNRSGVG) form a disordered region. Residue Gly-2 is modified to N-acetylglycine. Tyr-136 acts as the Proton donor in catalysis. Arg-189 contributes to the NADP(+) binding site. Lys-207 acts as the Proton acceptor in catalysis. A divalent metal cation-binding residues include Glu-279, Asp-280, and Asp-303. NADP(+)-binding positions include Asp-303, 332–348 (LFLG…ELIA), and Asn-444.

The protein belongs to the malic enzymes family. As to quaternary structure, homohexamers and homooctamers. Mg(2+) serves as cofactor. It depends on Mn(2+) as a cofactor. In terms of tissue distribution, expressed in leaves, stems, flowers and roots. Particularly present in vasculatures, trichome basal cells and hydatodes.

It localises to the cytoplasm. The catalysed reaction is (S)-malate + NADP(+) = pyruvate + CO2 + NADPH. It catalyses the reaction oxaloacetate + H(+) = pyruvate + CO2. Its activity is regulated as follows. Activated by coenzyme A (CoA), aspartate, succinate and fumarate. Repressed by oxaloacetate, glucose and ATP. In Arabidopsis thaliana (Mouse-ear cress), this protein is NADP-dependent malic enzyme 2 (NADP-ME2).